Consider the following 220-residue polypeptide: Acetate CoA-transferase subunit alpha (220 aa).

24-30 provides a ligand contact to CoA; it reads GGFMGIG.

It belongs to the 3-oxoacid CoA-transferase subunit A family. As to quaternary structure, heterotetramer composed of two alpha subunits (AtoD) and two beta subunits (AtoA).

Its subcellular location is the cytoplasm. It catalyses the reaction an acyl-CoA + acetate = a carboxylate + acetyl-CoA. The catalysed reaction is acetoacetate + acetyl-CoA = acetoacetyl-CoA + acetate. The enzyme catalyses butanoate + acetyl-CoA = butanoyl-CoA + acetate. It carries out the reaction acetoacetate + butanoyl-CoA = acetoacetyl-CoA + butanoate. The protein operates within lipid metabolism; short-chain fatty acid metabolism. Its activity is regulated as follows. Inhibited by p-chloromercuribenzoate. Functionally, coenzyme A transferase which is involved in short-chain fatty acid degradation and catalyzes the activation of short-chain fatty acids to their respective CoA thiolesters. During acetoacetate degradation, catalyzes the transfer of CoA from acetyl-CoA to acetoacetate by a mechanism involving a covalent enzyme-CoA compound as a reaction intermediate. Utilizes a variety of short chain acyl-CoA and carboxylic acid substrates but exhibits maximal activity with normal and 3-keto substrates. The sequence is that of Acetate CoA-transferase subunit alpha from Escherichia coli (strain K12).